The sequence spans 289 residues: Nucleotide-binding protein Franean1_2060 (289 aa).

Residue 13–20 (GLSGAGRS) participates in ATP binding. GTP is bound at residue 64–67 (DVRG).

This sequence belongs to the RapZ-like family.

In terms of biological role, displays ATPase and GTPase activities. The sequence is that of Nucleotide-binding protein Franean1_2060 from Parafrankia sp. (strain EAN1pec).